Reading from the N-terminus, the 333-residue chain is N-acetyl-gamma-glutamyl-phosphate reductase (333 aa).

Cys145 is an active-site residue.

The protein belongs to the NAGSA dehydrogenase family. Type 1 subfamily.

Its subcellular location is the cytoplasm. The enzyme catalyses N-acetyl-L-glutamate 5-semialdehyde + phosphate + NADP(+) = N-acetyl-L-glutamyl 5-phosphate + NADPH + H(+). It participates in amino-acid biosynthesis; L-arginine biosynthesis; N(2)-acetyl-L-ornithine from L-glutamate: step 3/4. Functionally, catalyzes the NADPH-dependent reduction of N-acetyl-5-glutamyl phosphate to yield N-acetyl-L-glutamate 5-semialdehyde. The protein is N-acetyl-gamma-glutamyl-phosphate reductase of Salinispora tropica (strain ATCC BAA-916 / DSM 44818 / JCM 13857 / NBRC 105044 / CNB-440).